Here is a 146-residue protein sequence, read N- to C-terminus: Hemoglobin subunit beta (146 aa).

Val-1 is subject to N-acetylvaline. A Globin domain is found at 2–146 (HLTGEEKSAV…VANALAHKYH (145 aa)). At Thr-12 the chain carries Phosphothreonine. Ser-44 carries the phosphoserine modification. N6-acetyllysine is present on Lys-59. His-63 is a binding site for heme b. Lys-82 bears the N6-acetyllysine mark. His-92 is a heme b binding site. Cys-93 bears the S-nitrosocysteine mark. An N6-acetyllysine modification is found at Lys-144.

The protein belongs to the globin family. In terms of assembly, heterotetramer of two alpha chains and two beta chains. In terms of tissue distribution, red blood cells.

Its function is as follows. Involved in oxygen transport from the lung to the various peripheral tissues. The chain is Hemoglobin subunit beta (HBB) from Mico argentatus (Silvery marmoset).